The following is a 1898-amino-acid chain: Receptor-type tyrosine-protein phosphatase F (1898 aa).

A signal peptide spans 1 to 29 (MAPEPAPGRRMVPLVPALVMLGLMAGAHG). At 30–1254 (DSKPVFVKVP…QQQEEPEMLW (1225 aa)) the chain is on the extracellular side. Ig-like C2-type domains follow at residues 33–123 (PVFV…AKLS), 135–224 (PTID…ANLY), and 232–314 (PRFS…AQVT). Cys-54 and Cys-107 form a disulfide bridge. 68–77 (KKGKKVSSQR) provides a ligand contact to heparin. A glycan (N-linked (GlcNAc...) asparagine) is linked at Asn-117. Residues Cys-156 and Cys-207 are joined by a disulfide bond. Residues Asn-250 and Asn-295 are each glycosylated (N-linked (GlcNAc...) asparagine). An intrachain disulfide couples Cys-253 to Cys-298. Fibronectin type-III domains follow at residues 321–411 (PPID…TGEQ), 416–510 (PPRR…TQQG), 514–604 (QPAD…TAQS), 609–706 (PPQK…TDED), 711–810 (PPRK…TTGA), 811–904 (VPGR…TPED), 909–1001 (FPQN…TMPV), and 1005–1089 (FAKN…TAPD). The segment at 693-712 (GPESSPVLVRTDEDVPSGPP) is disordered. N-linked (GlcNAc...) asparagine glycosylation is present at Asn-721. Residues Asn-941, Asn-957, and Asn-960 are each glycosylated (N-linked (GlcNAc...) asparagine). The helical transmembrane segment at 1255 to 1275 (VTGPVLAVILIILIVIAILLF) threads the bilayer. Residues 1276 to 1898 (KRKRTHSPSS…YLGSFDHYAT (623 aa)) lie on the Cytoplasmic side of the membrane. Ser-1296 is modified (phosphoserine). Tyrosine-protein phosphatase domains are found at residues 1343–1598 (FSQE…LLEA) and 1630–1889 (MELE…ALEY). Substrate contacts are provided by residues Asp-1507, 1539-1545 (CSAGVGR), and Gln-1583. The active-site Phosphocysteine intermediate is Cys-1539. The active-site Phosphocysteine intermediate is the Cys-1830.

The protein belongs to the protein-tyrosine phosphatase family. Receptor class 2A subfamily. In terms of assembly, interacts with GRIP1. Interacts with PPFIA1, PPFIA2 and PPFIA3. Interacts with PTPRF. In terms of tissue distribution, expressed in the cell of the T lineage but not in cells of any other hemopoietic lineage.

Its subcellular location is the membrane. It carries out the reaction O-phospho-L-tyrosyl-[protein] + H2O = L-tyrosyl-[protein] + phosphate. Its function is as follows. Possible cell adhesion receptor. It possesses an intrinsic protein tyrosine phosphatase activity (PTPase) and dephosphorylates EPHA2 regulating its activity. The chain is Receptor-type tyrosine-protein phosphatase F (Ptprf) from Mus musculus (Mouse).